A 261-amino-acid polypeptide reads, in one-letter code: Cytochrome c oxidase subunit 3 (261 aa).

Residues 1 to 15 are Mitochondrial matrix-facing; sequence MAHQAHSYHMVDPSP. A helical membrane pass occupies residues 16 to 34; sequence WPIFGAITALLTTSGLIMW. At 35–40 the chain is on the mitochondrial intermembrane side; it reads FHYNSI. The helical transmembrane segment at 41–66 threads the bilayer; sequence ALLTAGLLSMLLVMIQWWRDVVREST. Residues 67 to 72 lie on the Mitochondrial matrix side of the membrane; it reads FQGHHT. Residues 73-105 form a helical membrane-spanning segment; sequence PTVQKGLRYGMILFITSEAFFFLGFFWAFFHSS. Residues 106–128 are Mitochondrial intermembrane-facing; it reads LAPTPELGGQWPPTGIKPLNPLE. The helical transmembrane segment at 129–152 threads the bilayer; it reads VPLLNTAILLASGVTVTWAHHSIT. At 153–155 the chain is on the mitochondrial matrix side; the sequence is EGN. A helical membrane pass occupies residues 156–183; that stretch reads RKQAIHALTLTILLGFYFTALQAMEYHE. Residues 184 to 190 lie on the Mitochondrial intermembrane side of the membrane; that stretch reads ASFSIAD. Residues 191-223 form a helical membrane-spanning segment; the sequence is SVYGSTFFVATGFHGLHVIIGSSFLTICLLRLI. The Mitochondrial matrix segment spans residues 224–232; that stretch reads KFHFTSNHH. A helical membrane pass occupies residues 233–256; it reads FGFEAAAWYWHFVDIIWLFLYMSM. Over 257-261 the chain is Mitochondrial intermembrane; sequence YWWGS.

The protein belongs to the cytochrome c oxidase subunit 3 family. As to quaternary structure, component of the cytochrome c oxidase (complex IV, CIV), a multisubunit enzyme composed of 14 subunits. The complex is composed of a catalytic core of 3 subunits MT-CO1, MT-CO2 and MT-CO3, encoded in the mitochondrial DNA, and 11 supernumerary subunits COX4I, COX5A, COX5B, COX6A, COX6B, COX6C, COX7A, COX7B, COX7C, COX8 and NDUFA4, which are encoded in the nuclear genome. The complex exists as a monomer or a dimer and forms supercomplexes (SCs) in the inner mitochondrial membrane with NADH-ubiquinone oxidoreductase (complex I, CI) and ubiquinol-cytochrome c oxidoreductase (cytochrome b-c1 complex, complex III, CIII), resulting in different assemblies (supercomplex SCI(1)III(2)IV(1) and megacomplex MCI(2)III(2)IV(2)).

It is found in the mitochondrion inner membrane. The enzyme catalyses 4 Fe(II)-[cytochrome c] + O2 + 8 H(+)(in) = 4 Fe(III)-[cytochrome c] + 2 H2O + 4 H(+)(out). Its function is as follows. Component of the cytochrome c oxidase, the last enzyme in the mitochondrial electron transport chain which drives oxidative phosphorylation. The respiratory chain contains 3 multisubunit complexes succinate dehydrogenase (complex II, CII), ubiquinol-cytochrome c oxidoreductase (cytochrome b-c1 complex, complex III, CIII) and cytochrome c oxidase (complex IV, CIV), that cooperate to transfer electrons derived from NADH and succinate to molecular oxygen, creating an electrochemical gradient over the inner membrane that drives transmembrane transport and the ATP synthase. Cytochrome c oxidase is the component of the respiratory chain that catalyzes the reduction of oxygen to water. Electrons originating from reduced cytochrome c in the intermembrane space (IMS) are transferred via the dinuclear copper A center (CU(A)) of subunit 2 and heme A of subunit 1 to the active site in subunit 1, a binuclear center (BNC) formed by heme A3 and copper B (CU(B)). The BNC reduces molecular oxygen to 2 water molecules using 4 electrons from cytochrome c in the IMS and 4 protons from the mitochondrial matrix. This is Cytochrome c oxidase subunit 3 (MT-CO3) from Coturnix japonica (Japanese quail).